Consider the following 303-residue polypeptide: Pantothenate synthetase (303 aa).

Positions 1–21 (MIATGHGGAERRTTAGDGTAR) are disordered. ATP is bound at residue 48 to 55 (MGALHDGH). The active-site Proton donor is His55. (R)-pantoate is bound at residue Gln79. Gln79 provides a ligand contact to beta-alanine. 165–168 (GRKD) is an ATP binding site. Position 171 (Gln171) interacts with (R)-pantoate. ATP is bound at residue 202-205 (ASSR).

It belongs to the pantothenate synthetase family. Homodimer.

The protein resides in the cytoplasm. The enzyme catalyses (R)-pantoate + beta-alanine + ATP = (R)-pantothenate + AMP + diphosphate + H(+). It participates in cofactor biosynthesis; (R)-pantothenate biosynthesis; (R)-pantothenate from (R)-pantoate and beta-alanine: step 1/1. Functionally, catalyzes the condensation of pantoate with beta-alanine in an ATP-dependent reaction via a pantoyl-adenylate intermediate. The sequence is that of Pantothenate synthetase from Acidothermus cellulolyticus (strain ATCC 43068 / DSM 8971 / 11B).